The chain runs to 185 residues: MISVNDFRTGLTIEVDGNIFTVLEFQHVKPGKGAAFVRSKLRNLRSGNTTEMTFRGGEKVNPARIESSTMQYLYASGDEYTFMNTETYEQMTFTRNQIERELRFLKENMNVQIMQYNGETIGIQLPNTVELVVTECEPGVKGDTASNVTKKATLETGFVVNVPLFVEEGERLIIDTRTEAYVSRA.

It belongs to the elongation factor P family.

Its subcellular location is the cytoplasm. It functions in the pathway protein biosynthesis; polypeptide chain elongation. Functionally, involved in peptide bond synthesis. Stimulates efficient translation and peptide-bond synthesis on native or reconstituted 70S ribosomes in vitro. Probably functions indirectly by altering the affinity of the ribosome for aminoacyl-tRNA, thus increasing their reactivity as acceptors for peptidyl transferase. This chain is Elongation factor P, found in Brevibacillus brevis (strain 47 / JCM 6285 / NBRC 100599).